The following is a 150-amino-acid chain: Large ribosomal subunit protein bL9 (150 aa).

Belongs to the bacterial ribosomal protein bL9 family.

Binds to the 23S rRNA. This chain is Large ribosomal subunit protein bL9, found in Burkholderia ambifaria (strain MC40-6).